Consider the following 688-residue polypeptide: Translation initiation factor IF-2 (688 aa).

Basic and acidic residues-rich tracts occupy residues G53–E62 and K86–N95. Residues G53–E100 form a disordered region. The tr-type G domain maps to K187–E354. The segment at G196 to T203 is G1. GTP is bound at residue G196–T203. Residues G221 to H225 are G2. The interval D242–G245 is G3. Residues D242–H246 and N296–D299 contribute to the GTP site. The segment at N296–D299 is G4. The G5 stretch occupies residues S332 to H334.

It belongs to the TRAFAC class translation factor GTPase superfamily. Classic translation factor GTPase family. IF-2 subfamily.

The protein localises to the cytoplasm. In terms of biological role, one of the essential components for the initiation of protein synthesis. Protects formylmethionyl-tRNA from spontaneous hydrolysis and promotes its binding to the 30S ribosomal subunits. Also involved in the hydrolysis of GTP during the formation of the 70S ribosomal complex. The protein is Translation initiation factor IF-2 of Clostridium botulinum (strain Kyoto / Type A2).